The primary structure comprises 20 residues: Thylakoid lumenal 18.4 kDa protein (20 aa).

Its subcellular location is the plastid. It is found in the chloroplast thylakoid lumen. This chain is Thylakoid lumenal 18.4 kDa protein, found in Spinacia oleracea (Spinach).